The sequence spans 379 residues: ATP-sensitive inward rectifier potassium channel 10 (379 aa).

At 1–61 (MTSVAKVYYS…LKDLWTTFID (61 aa)) the chain is on the cytoplasmic side. Position 36 (Arg-36) interacts with 1,2-dioctanoyl-sn-glycero-3-phospho-(1D-myo-inositol-4,5-bisphosphate). The chain crosses the membrane as a helical span at residues 62–88 (MQWRYKLLLFSATFAGTWFLFGVVWYL). The Extracellular segment spans residues 89 to 114 (VAVAHGDLLELGPPANHTPCVVQVHT). An intrachain disulfide couples Cys-108 to Cys-140. The segment at residues 115–131 (LTGAFLFSLESQTTIGY) is an intramembrane region (discontinuously helical; Pore-forming). The short motif at 128–133 (TIGYGF) is the Selectivity filter element. At 132–140 (GFRYISEEC) the chain is on the extracellular side. Residues 141-166 (PLAIVLLIAQLVLTTILEIFITGTFL) traverse the membrane as a helical segment. Residues 167 to 379 (AKIARPKKRA…SALSVRISNV (213 aa)) lie on the Cytoplasmic side of the membrane. 3 residues coordinate 1,2-dioctanoyl-sn-glycero-3-phospho-(1D-myo-inositol-4,5-bisphosphate): Lys-168, Arg-171, and Lys-173. 210-217 (GCQVTGKL) lines the ATP pocket.

The protein belongs to the inward rectifier-type potassium channel (TC 1.A.2.1) family. KCNJ10 subfamily. In terms of assembly, homotetramer. In kidney cells, it forms heteromeric channels with Kir5.1/KCNJ16; this interaction is required for KCNJ16 localization to the basolateral membrane. Interacts with MAGI1, alone and possibly as a heteromer with KCNJ16; this interaction may facilitate KCNJ10/KCNJ16 potassium channel expression at the basolateral membrane in kidney cells. Interacts with PATJ. Predominantly expressed in the brain, including in glial cells of the cerebellum and forebrain. Expressed at lower levels in the kidney, and other peripheral tissues.

The protein resides in the membrane. Its subcellular location is the basolateral cell membrane. The enzyme catalyses K(+)(in) = K(+)(out). Its activity is regulated as follows. Channel activity is strongly regulated by variations of cytosolic pH; channels are activated by alkaline and inhibited by acidic pH values. Activated by phosphatidylinositol 4,5 biphosphate (PtdIns(4,5)P2). Inhibited by Ba(2+) and Cs(+). Its function is as follows. May be responsible for potassium buffering action of glial cells in the brain. Inward rectifier potassium channels are characterized by a greater tendency to allow potassium to flow into the cell rather than out of it. Their voltage dependence is regulated by the concentration of extracellular potassium; as external potassium is raised, the voltage range of the channel opening shifts to more positive voltages. The inward rectification is mainly due to the blockage of outward current by internal magnesium. Can be blocked by extracellular barium and cesium. In the kidney, together with KCNJ16, mediates basolateral K(+) recycling in distal tubules; this process is critical for Na(+) reabsorption at the tubules. The sequence is that of ATP-sensitive inward rectifier potassium channel 10 from Rattus norvegicus (Rat).